We begin with the raw amino-acid sequence, 468 residues long: ATP synthase subunit beta (468 aa).

148–155 (GGAGVGKT) lines the ATP pocket.

The protein belongs to the ATPase alpha/beta chains family. As to quaternary structure, F-type ATPases have 2 components, CF(1) - the catalytic core - and CF(0) - the membrane proton channel. CF(1) has five subunits: alpha(3), beta(3), gamma(1), delta(1), epsilon(1). CF(0) has three main subunits: a(1), b(2) and c(9-12). The alpha and beta chains form an alternating ring which encloses part of the gamma chain. CF(1) is attached to CF(0) by a central stalk formed by the gamma and epsilon chains, while a peripheral stalk is formed by the delta and b chains.

The protein localises to the cell inner membrane. It carries out the reaction ATP + H2O + 4 H(+)(in) = ADP + phosphate + 5 H(+)(out). Its function is as follows. Produces ATP from ADP in the presence of a proton gradient across the membrane. The catalytic sites are hosted primarily by the beta subunits. This Xanthomonas campestris pv. campestris (strain 8004) protein is ATP synthase subunit beta.